The following is a 388-amino-acid chain: Staphopain A (388 aa).

Residues 1–25 (MKRNFPKLIALSLIFSLSITPIANA) form the signal peptide. A propeptide spanning residues 26 to 214 (ESNSNIKAKD…TSQFKSNNYT (189 aa)) is cleaved from the precursor. Residues C238, H334, and N355 contribute to the active site.

Belongs to the peptidase C47 family. In the cytoplasm, prematurely activated/folded ScpA forms a stable non-covalent complex with ScpB. Cleavage leads to the activation of ScpA probably by an auto-catalytic manner.

Its subcellular location is the secreted. The enzyme catalyses Broad endopeptidase action on proteins including elastin, but rather limited hydrolysis of small-molecule substrates. Assays are conveniently made with hemoglobin, casein or Z-Phe-Arg-NHMec as substrate.. Its activity is regulated as follows. Prematurely activated/folded staphopain A is inhibited by staphostatin A (ScpB), which is probably required to protect staphylococcal cytoplasmic proteins from degradation by ScpA. Its function is as follows. Cysteine protease that plays an important role in the inhibition of host innate immune response. Cleaves host elastins found in connective tissues, pulmonary surfactant protein A in the lungs, and the chemokine receptor CXCR2 on leukocytes. Proteolytic cleavage of surfactant protein A impairs bacterial phagocytosis by neutrophils while CXCR2 degradation blocks neutrophil activation and chemotaxis. Additionally, promotes vascular leakage by activating the plasma kallikerin/kinin system, resulting in hypotension. In Staphylococcus aureus (strain MRSA252), this protein is Staphopain A (sspP).